The primary structure comprises 78 residues: Large ribosomal subunit protein bL28 (78 aa).

Positions 1 to 22 are disordered; the sequence is MAKVCQVTGKRPVTGHNVSHAK.

It belongs to the bacterial ribosomal protein bL28 family.

This Saccharophagus degradans (strain 2-40 / ATCC 43961 / DSM 17024) protein is Large ribosomal subunit protein bL28.